Reading from the N-terminus, the 541-residue chain is Nectin 1b (541 aa).

An N-terminal signal peptide occupies residues 1–21 (MDKQESFFVGHKSHRCSQNRS). The Extracellular segment spans residues 22–396 (VSQIHQRTSR…PAELHSSGAA (375 aa)). Asn-51, Asn-105, Asn-180, Asn-242, Asn-326, Asn-337, and Asn-372 each carry an N-linked (GlcNAc...) asparagine glycan. Residues 77-182 (GDTVELKCLF…GNRENMVNLT (106 aa)) form the Ig-like V-type domain. An intrachain disulfide couples Cys-84 to Cys-165. Ig-like C2-type domains lie at 187–282 (PVTK…VILN) and 287–374 (PEVK…VNVT). Cystine bridges form between Cys-212–Cys-266 and Cys-309–Cys-356. Residues 397–417 (IGGAVGGVALLVAAIALLVFF) traverse the membrane as a helical segment. Residues 418–541 (LRRRQRTFKG…SVISKKEWYV (124 aa)) lie on the Cytoplasmic side of the membrane. The disordered stretch occupies residues 440-507 (YSKAGGMPAH…VDEGESRDYD (68 aa)). Positions 479 to 493 (SGDRDFDGNSEDLKR) are enriched in basic and acidic residues.

It belongs to the nectin family. In terms of assembly, cis- and trans-homodimer. Can form trans-heterodimers. As to expression, expressed in the developing eye and nervous system.

The protein localises to the cell membrane. It is found in the cell junction. It localises to the adherens junction. In terms of biological role, cell adhesion molecule that promotes cell-cell contacts and plays important roles in the development of the nervous system. Acts by forming homophilic or heterophilic trans-dimers. The sequence is that of Nectin 1b from Danio rerio (Zebrafish).